We begin with the raw amino-acid sequence, 1127 residues long: Nck-associated protein 1-like (1127 aa).

Positions 638-670 are disordered; it reads KAKNKKTRKQRQTPRKGEPERDKPGAESHRKNR. Over residues 639-651 the composition is skewed to basic residues; the sequence is AKNKKTRKQRQTP. A compositionally biased stretch (basic and acidic residues) spans 652-666; sequence RKGEPERDKPGAESH. A helical transmembrane segment spans residues 996–1016; sequence VACLLLIFLAVSLPLLATDPS.

The protein belongs to the HEM-1/HEM-2 family. In hematopoietic cells, component of the WAVE2 complex composed of ABI1, CYFIP1/SRA1, NCKAP1L/HEM1 and WASF2/WAVE2. Interacts with ARHGAP4, PIK3C3/VPS34 and PPP1R12A/MYPT1. Interacts with mammalian target of rapamycin complex 2 (mTORC2) components, including MTOR and RICTOR. In terms of tissue distribution, expressed only in cells of hematopoietic origin. Expressed in neutrophils (at protein level). Expressed in T-cells (at protein level).

The protein resides in the cell membrane. It localises to the cytoplasm. Functionally, essential hematopoietic-specific regulator of the actin cytoskeleton. Controls lymphocyte development, activation, proliferation and homeostasis, erythrocyte membrane stability, as well as phagocytosis and migration by neutrophils and macrophages. Component of the WAVE2 complex which signals downstream of RAC to stimulate F-actin polymerization. Required for stabilization and/or translation of the WAVE2 complex proteins in hematopoietic cells. Within the WAVE2 complex, enables the cortical actin network to restrain excessive degranulation and granule release by T-cells. Required for efficient T-lymphocyte and neutrophil migration. Exhibits complex cycles of activation and inhibition to generate waves of propagating the assembly with actin. Also involved in mechanisms WAVE-independent to regulate myosin and actin polymerization during neutrophil chemotaxis. In T-cells, required for proper mechanistic target of rapamycin complex 2 (mTORC2)-dependent AKT phosphorylation, cell proliferation and cytokine secretion, including that of IL2 and TNF. The polypeptide is Nck-associated protein 1-like (Homo sapiens (Human)).